Consider the following 457-residue polypeptide: Phenylalanine-4-hydroxylase (457 aa).

The 78-residue stretch at 31 to 108 (TIVFTLREKA…EKKVLVQDWN (78 aa)) folds into the ACT domain. Fe cation is bound by residues His-285, His-290, and Glu-330.

It belongs to the biopterin-dependent aromatic amino acid hydroxylase family. Homotetramer. It depends on Fe(2+) as a cofactor. As to expression, expressed in the seam cells of the lateral hypodermis, in the ventral hypodermis and in the hyp7 hypodermal syncytium, in hypodermal cells in the tail and in body wall muscle cells (at protein level).

The protein resides in the cytoplasm. It carries out the reaction (6R)-L-erythro-5,6,7,8-tetrahydrobiopterin + L-phenylalanine + O2 = (4aS,6R)-4a-hydroxy-L-erythro-5,6,7,8-tetrahydrobiopterin + L-tyrosine. The enzyme catalyses (6R)-L-erythro-5,6,7,8-tetrahydrobiopterin + L-tryptophan + O2 = 5-hydroxy-L-tryptophan + (4aS,6R)-4a-hydroxy-L-erythro-5,6,7,8-tetrahydrobiopterin. Its pathway is amino-acid degradation; L-phenylalanine degradation; acetoacetate and fumarate from L-phenylalanine: step 1/6. Inhibited by tetrahydrobiopterin. Unlike its mammalian orthologs, pah-1 does not exhibit allosteric binding behavior for phenylalanine. In terms of biological role, catalyzes the hydroxylation of L-phenylalanine to L-tyrosine. Catalyzes the hydroxylation of tryptophan to 5-hydroxy-L-tryptophan. Plays a role in the biosynthesis of a melanin-like cuticle pigment. The sequence is that of Phenylalanine-4-hydroxylase from Caenorhabditis elegans.